Consider the following 218-residue polypeptide: Protein-methionine-sulfoxide reductase heme-binding subunit MsrQ (218 aa).

5 consecutive transmembrane segments (helical) span residues 8–28 (VIVA…LLGW), 60–80 (FLLI…AVLI), 86–106 (LGLY…TLDL), 121–141 (PYIT…ITST), and 155–175 (VHML…WLVK).

The protein belongs to the MsrQ family. In terms of assembly, heterodimer of a catalytic subunit (MsrP) and a heme-binding subunit (MsrQ). It depends on FMN as a cofactor. Heme b serves as cofactor.

The protein localises to the cell inner membrane. Functionally, part of the MsrPQ system that repairs oxidized periplasmic proteins containing methionine sulfoxide residues (Met-O), using respiratory chain electrons. Thus protects these proteins from oxidative-stress damage caused by reactive species of oxygen and chlorine generated by the host defense mechanisms. MsrPQ is essential for the maintenance of envelope integrity under bleach stress, rescuing a wide series of structurally unrelated periplasmic proteins from methionine oxidation. MsrQ provides electrons for reduction to the reductase catalytic subunit MsrP, using the quinone pool of the respiratory chain. The protein is Protein-methionine-sulfoxide reductase heme-binding subunit MsrQ of Xanthomonas oryzae pv. oryzae (strain MAFF 311018).